We begin with the raw amino-acid sequence, 61 residues long: Metallothionein-1 (61 aa).

The residue at position 1 (methionine 1) is an N-acetylmethionine. The interval 1-29 (MDPNCSCSTGSTCTCSSSCGCKDCKCTSC) is beta. Residues cysteine 5, cysteine 7, cysteine 13, cysteine 15, cysteine 19, cysteine 21, cysteine 24, cysteine 26, cysteine 29, cysteine 33, cysteine 34, cysteine 36, cysteine 37, cysteine 41, cysteine 44, cysteine 48, cysteine 50, cysteine 57, cysteine 59, and cysteine 60 each coordinate a divalent metal cation. The segment at 30–61 (KKSCCSCCPVGCSKCAQGCVCKGASDKCTCCA) is alpha.

It belongs to the metallothionein superfamily. Type 1 family.

Functionally, metallothioneins have a high content of cysteine residues that bind various heavy metals; these proteins are transcriptionally regulated by both heavy metals and glucocorticoids. The sequence is that of Metallothionein-1 (MT1) from Cricetulus griseus (Chinese hamster).